The sequence spans 288 residues: Xyloglucan endotransglucosylase protein 8 (288 aa).

The signal sequence occupies residues 1–25 (MAASPYSIFAVQLLLLASWMLSSSS). A GH16 domain is found at 26-215 (SNFNQDFNIA…WTQAPFTTSY (190 aa)). Residue E102 is the Nucleophile of the active site. The active-site Proton donor is the E106. E106 is a binding site for xyloglucan. A glycan (N-linked (GlcNAc...) asparagine) is linked at N110. Xyloglucan is bound by residues 119-121 (HTN), 129-131 (ERE), 194-195 (EW), and G199. 2 cysteine pairs are disulfide-bonded: C224–C233 and C268–C282. R273 serves as a coordination point for xyloglucan.

Belongs to the glycosyl hydrolase 16 family. XTH group 2 subfamily. Post-translationally, contains at least one intrachain disulfide bond essential for its enzymatic activity. In terms of tissue distribution, highly expressed in mature fruits. Very low expression in leaves, flowers, calyces and stems.

Its subcellular location is the secreted. It localises to the cell wall. It is found in the extracellular space. The protein resides in the apoplast. The enzyme catalyses breaks a beta-(1-&gt;4) bond in the backbone of a xyloglucan and transfers the xyloglucanyl segment on to O-4 of the non-reducing terminal glucose residue of an acceptor, which can be a xyloglucan or an oligosaccharide of xyloglucan.. In terms of biological role, catalyzes xyloglucan endotransglycosylation (XET). Cleaves and religates xyloglucan polymers. Does not catalyze xyloglucan endohydrolysis (XEH). Overexpression in Arabidopsis transgenic plants causes accelerated dark-induced leaf senescence and higher lipid peroxidation of the leaf cells. Overexpression in transgenic tomato plants promotes fruit ripening and softening. Probably involved in cell wall restructuring during postharvest fruit softening. This chain is Xyloglucan endotransglucosylase protein 8, found in Diospyros kaki (Kaki persimmon).